The following is a 272-amino-acid chain: SPbeta prophage-derived aminoglycoside N(3')-acetyltransferase-like protein YokD (272 aa).

CoA contacts are provided by residues 38–44 (LSSIGWV) and Q113.

It belongs to the antibiotic N-acetyltransferase family. Homodimer.

In terms of biological role, may contribute to antibiotic resistance. The sequence is that of SPbeta prophage-derived aminoglycoside N(3')-acetyltransferase-like protein YokD (yokD) from Bacillus subtilis (strain 168).